A 219-amino-acid polypeptide reads, in one-letter code: Factor in the germline alpha (219 aa).

The region spanning 65–117 (ERRRVANAKERERIKNLNRGFARLKALVPFLPQSRKPSKVDILKGATEYIQVL) is the bHLH domain. A disordered region spans residues 124–151 (AKDSKKQDPDEQSYSNNSSESHTSSARQ). A compositionally biased stretch (low complexity) spans 136-148 (SYSNNSSESHTSS).

Heterodimer with TCF3/isoform E12. As to expression, germ cells. Expressed in the fetal ovary, but not by a range of other tissues. Expression increases across mid-gestation, rising some 40-fold by the time of primordial follicle formation.

The protein localises to the nucleus. Its function is as follows. Germline specific transcription factor implicated in postnatal oocyte-specific gene expression. Plays a key regulatory role in the expression of multiple oocyte-specific genes, including those that initiate folliculogenesis and those that encode the zona pellucida (ZP1, ZP2 and ZP3) required for fertilization and early embryonic survival. Essential for oocytes to survive and form primordial follicles. The persistence of FIGLA in adult females suggests that it may regulate additional pathways that are essential for normal ovarian development. Binds to the E-box (5'-CANNTG-3') of the ZPs (ZP1, ZP2, ZP3) promoters. This chain is Factor in the germline alpha (FIGLA), found in Homo sapiens (Human).